The chain runs to 523 residues: Putative pentatricopeptide repeat-containing protein At3g15200 (523 aa).

10 PPR repeats span residues 142-172 (SSMLYNEILDVLGKMRRFEEFHQVFDEMSKR), 177-211 (NEKTYEVLLNRYAAAHKVDEAVGVFERRKEFGIDD), 212-242 (DLVAFHGLLMWLCRYKHVEFAETLFCSRRRE), 246-280 (DIKAMNMILNGWCVLGNVHEAKRFWKDIIASKCRP), 281-315 (DVVSYGTMINALTKKGKLGKAMELYRAMWDTRRNP), 316-350 (DVKICNNVIDALCFKKRIPEALEVFREISEKGPDP), 351-385 (NVVTYNSLLKHLCKIRRTEKVWELVEEMELKGGSC), 388-418 (NDVTFSYLLKYSQRSKDVDIVLERMAKNKCE), 420-454 (TSDLYNLMFRLYVQWDKEEKVREIWSEMERSGLGP), and 455-489 (DQRTYTIRIHGLHTKGKIGEALSYFQEMMSKGMVP). Positions 497–523 (LNQNKTKPRVEDKMLRSNLTSEESESD) are disordered.

Belongs to the PPR family. P subfamily.

This is Putative pentatricopeptide repeat-containing protein At3g15200 from Arabidopsis thaliana (Mouse-ear cress).